We begin with the raw amino-acid sequence, 192 residues long: Lipid A acyltransferase PagP (192 aa).

An N-terminal signal peptide occupies residues 1 to 26; sequence MTVVNKSFLTILIFFCQILFPLNASA. Catalysis depends on residues His64, Asp107, and Ser108.

Belongs to the lipid A palmitoyltransferase family. In terms of assembly, homodimer.

The protein resides in the cell outer membrane. It catalyses the reaction a lipid A + a 1,2-diacyl-sn-glycero-3-phosphocholine = a hepta-acyl lipid A + a 2-acyl-sn-glycero-3-phosphocholine. The catalysed reaction is a lipid IVA + a 1,2-diacyl-sn-glycero-3-phosphocholine = a lipid IVB + a 2-acyl-sn-glycero-3-phosphocholine. The enzyme catalyses a lipid IIA + a 1,2-diacyl-sn-glycero-3-phosphocholine = a lipid IIB + a 2-acyl-sn-glycero-3-phosphocholine. Transfers a fatty acid residue from the sn-1 position of a phospholipid to the N-linked hydroxyfatty acid chain on the proximal unit of lipid A or its precursors. This is Lipid A acyltransferase PagP from Cronobacter sakazakii (strain ATCC BAA-894) (Enterobacter sakazakii).